Reading from the N-terminus, the 139-residue chain is D-ribose pyranase (139 aa).

H20 serves as the catalytic Proton donor. Substrate contacts are provided by residues D28, H106, and 128 to 130; that span reads YAN.

The protein belongs to the RbsD / FucU family. RbsD subfamily. In terms of assembly, homodecamer.

It is found in the cytoplasm. The catalysed reaction is beta-D-ribopyranose = beta-D-ribofuranose. Its pathway is carbohydrate metabolism; D-ribose degradation; D-ribose 5-phosphate from beta-D-ribopyranose: step 1/2. Catalyzes the interconversion of beta-pyran and beta-furan forms of D-ribose. The protein is D-ribose pyranase of Aeromonas salmonicida (strain A449).